A 486-amino-acid chain; its full sequence is Zinc metalloproteinase-disintegrin VMP-II (486 aa).

Residues 1–20 form the signal peptide; it reads MIQVLLVTICLAVFPYQGSS. A propeptide spanning residues 21–190 is cleaved from the precursor; the sequence is IILESGNVND…KASQSNLPPE (170 aa). The residue at position 191 (Gln191) is a Pyrrolidone carboxylic acid. The 198-residue stretch at 197-394 folds into the Peptidase M12B domain; sequence RYIELVVVAD…HYTTCLYNEP (198 aa). Ca(2+) is bound by residues Glu200 and Asp284. 3 disulfides stabilise this stretch: Cys308–Cys389, Cys348–Cys372, and Cys350–Cys355. Zn(2+) is bound at residue His333. Glu334 is an active-site residue. Zn(2+) is bound by residues His337 and His343. Residues Cys389 and Asn392 each coordinate Ca(2+). The Disintegrin domain occupies 402 to 486; it reads PPVCGNYYTE…AECPNKGYYG (85 aa). 7 disulfides stabilise this stretch: Cys405-Cys424, Cys416-Cys434, Cys418-Cys429, Cys428-Cys451, Cys442-Cys448, Cys447-Cys472, and Cys460-Cys479. The Cell attachment site signature appears at 464–466; that stretch reads RGD.

Belongs to the venom metalloproteinase (M12B) family. P-II subfamily. P-IIb sub-subfamily. In terms of assembly, monomer. Requires Zn(2+) as cofactor. Expressed by the venom gland.

The protein localises to the secreted. Its function is as follows. Snake venom zinc metalloproteinase that inhibits ADP-induced platelet aggregation (probably by binding integrin alpha-IIb/beta-3 (ITGA2B/ITGB3)) and degrades fibrinogen. This chain is Zinc metalloproteinase-disintegrin VMP-II, found in Crotalus atrox (Western diamondback rattlesnake).